A 910-amino-acid chain; its full sequence is DNA repair and recombination protein RAD54B (910 aa).

Residues 1–14 (MRRSAAPSQLQGNS) show a composition bias toward polar residues. Positions 1-33 (MRRSAAPSQLQGNSFKKPKFIPPGRSNPGLNEE) are disordered. Phosphoserine is present on S14. The region spanning 313-480 (GMRMNGRCGA…FALIDFVNPG (168 aa)) is the Helicase ATP-binding domain. 326–333 (DEMGLGKT) is a binding site for ATP. The DEGH box signature appears at 431–434 (DEGH). The Helicase C-terminal domain occupies 649–810 (KLLAVIHELR…HIQFSVEELK (162 aa)).

It belongs to the SNF2/RAD54 helicase family. In terms of assembly, interacts with RAD51 through the NH2-terminal domain. Immunoprecipitation experiments show that the interaction is constitutive and not induced by ionizing radiation. The interaction may be indirect. Abundantly expressed in testis and spleen. Relatively low levels observed in thymus, prostate, ovary and colon.

The protein resides in the nucleus. Functionally, involved in DNA repair and mitotic recombination. May play an active role in recombination processes in concert with other members of the RAD52 epistasis group. This is DNA repair and recombination protein RAD54B (RAD54B) from Homo sapiens (Human).